Here is a 118-residue protein sequence, read N- to C-terminus: NAD(P)H-quinone oxidoreductase subunit M (118 aa).

The protein belongs to the complex I NdhM subunit family. As to quaternary structure, NDH-1 can be composed of about 15 different subunits; different subcomplexes with different compositions have been identified which probably have different functions.

The protein localises to the cellular thylakoid membrane. It carries out the reaction a plastoquinone + NADH + (n+1) H(+)(in) = a plastoquinol + NAD(+) + n H(+)(out). It catalyses the reaction a plastoquinone + NADPH + (n+1) H(+)(in) = a plastoquinol + NADP(+) + n H(+)(out). In terms of biological role, NDH-1 shuttles electrons from an unknown electron donor, via FMN and iron-sulfur (Fe-S) centers, to quinones in the respiratory and/or the photosynthetic chain. The immediate electron acceptor for the enzyme in this species is believed to be plastoquinone. Couples the redox reaction to proton translocation, and thus conserves the redox energy in a proton gradient. Cyanobacterial NDH-1 also plays a role in inorganic carbon-concentration. The polypeptide is NAD(P)H-quinone oxidoreductase subunit M (Rippkaea orientalis (strain PCC 8801 / RF-1) (Cyanothece sp. (strain PCC 8801))).